The sequence spans 192 residues: GTP cyclohydrolase-2 (192 aa).

GTP is bound at residue 50–54 (RLHSE). Residues Cys55, Cys66, and Cys68 each contribute to the Zn(2+) site. Residues 92–94 (EGR) and Thr114 each bind GTP. Asp126 functions as the Proton acceptor in the catalytic mechanism. The Nucleophile role is filled by Arg128. GTP-binding residues include Thr149 and Lys154.

The protein belongs to the GTP cyclohydrolase II family. It depends on Zn(2+) as a cofactor.

The enzyme catalyses GTP + 4 H2O = 2,5-diamino-6-hydroxy-4-(5-phosphoribosylamino)-pyrimidine + formate + 2 phosphate + 3 H(+). It functions in the pathway cofactor biosynthesis; riboflavin biosynthesis; 5-amino-6-(D-ribitylamino)uracil from GTP: step 1/4. Functionally, catalyzes the conversion of GTP to 2,5-diamino-6-ribosylamino-4(3H)-pyrimidinone 5'-phosphate (DARP), formate and pyrophosphate. The protein is GTP cyclohydrolase-2 of Helicobacter acinonychis (strain Sheeba).